We begin with the raw amino-acid sequence, 145 residues long: Small ribosomal subunit protein uS19 (145 aa).

The residue at position 2 (alanine 2) is an N-acetylalanine. Residue lysine 108 forms a Glycyl lysine isopeptide (Lys-Gly) (interchain with G-Cter in SUMO2) linkage.

Belongs to the universal ribosomal protein uS19 family. In terms of assembly, component of the small ribosomal subunit.

The protein localises to the cytoplasm. Functionally, component of the small ribosomal subunit. The ribosome is a large ribonucleoprotein complex responsible for the synthesis of proteins in the cell. This chain is Small ribosomal subunit protein uS19 (RPS15), found in Mesocricetus auratus (Golden hamster).